Here is a 417-residue protein sequence, read N- to C-terminus: Glutamyl-tRNA reductase (417 aa).

Residues 48–51 (TCNR), serine 100, 105–107 (EDQ), and glutamine 111 each bind substrate. Cysteine 49 functions as the Nucleophile in the catalytic mechanism. 180–185 (GAGETG) is a binding site for NADP(+).

This sequence belongs to the glutamyl-tRNA reductase family. In terms of assembly, homodimer.

It catalyses the reaction (S)-4-amino-5-oxopentanoate + tRNA(Glu) + NADP(+) = L-glutamyl-tRNA(Glu) + NADPH + H(+). It participates in porphyrin-containing compound metabolism; protoporphyrin-IX biosynthesis; 5-aminolevulinate from L-glutamyl-tRNA(Glu): step 1/2. Functionally, catalyzes the NADPH-dependent reduction of glutamyl-tRNA(Glu) to glutamate 1-semialdehyde (GSA). In Methanothrix thermoacetophila (strain DSM 6194 / JCM 14653 / NBRC 101360 / PT) (Methanosaeta thermophila), this protein is Glutamyl-tRNA reductase.